The primary structure comprises 457 residues: Phosphoglucosamine mutase (457 aa).

Ser-103 (phosphoserine intermediate) is an active-site residue. Residues Ser-103, Asp-245, Asp-247, and Asp-249 each coordinate Mg(2+). Ser-103 bears the Phosphoserine mark.

It belongs to the phosphohexose mutase family. It depends on Mg(2+) as a cofactor. Post-translationally, activated by phosphorylation.

It catalyses the reaction alpha-D-glucosamine 1-phosphate = D-glucosamine 6-phosphate. Functionally, catalyzes the conversion of glucosamine-6-phosphate to glucosamine-1-phosphate. The chain is Phosphoglucosamine mutase from Syntrophotalea carbinolica (strain DSM 2380 / NBRC 103641 / GraBd1) (Pelobacter carbinolicus).